Consider the following 457-residue polypeptide: Cysteine desulfurase (457 aa).

Pyridoxal 5'-phosphate contacts are provided by A127, T128, Q235, S255, and H257. An N6-(pyridoxal phosphate)lysine modification is found at K258. Residue T295 coordinates pyridoxal 5'-phosphate. C381 acts as the Cysteine persulfide intermediate in catalysis. C381 contributes to the [2Fe-2S] cluster binding site. C381 is a binding site for Zn(2+). C381 carries the cysteine persulfide modification.

It belongs to the class-V pyridoxal-phosphate-dependent aminotransferase family. NifS/IscS subfamily. As to quaternary structure, homodimer. Component of the mitochondrial core iron-sulfur cluster (ISC) complex composed of NFS1, LYRM4, NDUFAB1, ISCU, FXN, and FDX2; this complex is a heterohexamer containing two copies of each monomer. Component of cyteine desulfurase complex composed of NFS1, LYRM4 and NDUFAB1; this complex contributes to the activation of cysteine desulfurase activity and NFS1 stabilization. Interacts (homodimer form) with ISCU (D-state); each monomer interacts with the C-terminal regions of each NFS1 monomer. Interacts with HSPA9. Interacts (via homodimer form) with FDX2. Interacts (via homodimer form) with FXN. Interacts with LYRM4. Component of a complex composed of FXN, NFS1, LYRM4 and ISCU. Monomer. Homodimer. Oligomer. Interacts with ISCU. Component of the cysteine desulfurase complex composed of NFS1 and LYRM4; this complex contributes to the activation of cysteine desulfurase activity. Interacts with MOCS3. It depends on pyridoxal 5'-phosphate as a cofactor. In terms of processing, N-gluconoylated. Cysteine persulfide intermediate is reduced by thiol-containing molecules like glutathione and L-cysteine. Persulfide reduction is a rate-limiting step of cysteine desulfurase catalytic cycle.

The protein resides in the mitochondrion. Its subcellular location is the cytoplasm. The protein localises to the nucleus. It localises to the cytoskeleton. It is found in the microtubule organizing center. The protein resides in the centrosome. It carries out the reaction (sulfur carrier)-H + L-cysteine = (sulfur carrier)-SH + L-alanine. The enzyme catalyses L-cysteinyl-[cysteine desulfurase] + L-cysteine = S-sulfanyl-L-cysteinyl-[cysteine desulfurase] + L-alanine. Active only in complex with LYRM4. Functionally, cysteine desulfurase, of the core iron-sulfur cluster (ISC) assembly complex, that catalyzes the desulfuration of L-cysteine to L-alanine, as component of the cysteine desulfurase complex leading to the formation of a cysteine persulfide intermediate at the active site cysteine residue and participates in the [2Fe-2S] clusters assembly on the scaffolding protein ISCU. The persulfide is then transferred on the flexible Cys loop from the catalytic site of NFS1 to the surface of NFS1. After the NFS1-linked persulfide sulfur is transferred to one of the conserved Cys residues of the scaffold, a reaction assisted by FXN. The core iron-sulfur cluster (ISC) assembly complex is involved in the de novo synthesis of a [2Fe-2S] cluster, the first step of the mitochondrial iron-sulfur protein biogenesis. This process is initiated by the cysteine desulfurase complex (NFS1:LYRM4:NDUFAB1) that produces persulfide which is delivered on the scaffold protein ISCU in a FXN-dependent manner. Then this complex is stabilized by FDX2 which provides reducing equivalents to accomplish the [2Fe-2S] cluster assembly. Finally, the [2Fe-2S] cluster is transferred from ISCU to chaperone proteins, including HSCB, HSPA9 and GLRX5. In terms of biological role, may catalyze the desulfuration of L-cysteine to L-alanine as component of the cysteine desulfurase complex (NFS1:LYRM4), leading to the formation of a cysteine persulfide intermediate. Acts as a sulfur donor for MOCS3 by transferring the sulfur of the cysteine persulfide intermediate on MOCS3. The protein is Cysteine desulfurase of Pongo abelii (Sumatran orangutan).